Consider the following 757-residue polypeptide: Two pore calcium channel protein 1 (757 aa).

The Cytoplasmic portion of the chain corresponds to 1-94 (MRERGEMREA…NDTRFERAMR (94 aa)). Residues 24–48 (HSHGSGSSGTGSHTSGGGGGWRGSR) form a disordered region. A compositionally biased stretch (gly residues) spans 29–45 (GSSGTGSHTSGGGGGWR). Residues 95–115 (FYFVYLRLDWLWSLNLFALIL) traverse the membrane as a helical segment. Residues 116 to 152 (LNFLEKPLWCRGYSQHACDQRDLYFLGQLPYLSKTES) are Extracellular-facing. The chain crosses the membrane as a helical span at residues 153–173 (LIYEGLTLVILVMDIFYPLSY). The Cytoplasmic segment spans residues 174–188 (EGLNLFWKNTINKLK). A helical membrane pass occupies residues 189 to 209 (VLLLFILACDILVFAFSPQPF). Position 210 (arginine 210) is a topological domain, extracellular. The chain crosses the membrane as a helical; Voltage-sensor span at residues 211–228 (VAPYIRVAFLIMNIRELR). The Cytoplasmic segment spans residues 229 to 233 (MCAVT). Residues 234 to 254 (LVGMVGTYLNVLALSLLFLLF) form a helical membrane-spanning segment. The Extracellular portion of the chain corresponds to 255 to 270 (ASWLAYVTFEDTPQGK). The segment at residues 271-285 (TVFSSYGTTLYQMFI) is an intramembrane region (pore-forming). At 286–308 (LFTTSNNPDVWVPAYKSSRWSSL) the chain is on the extracellular side. Residues 309–329 (FFIVYVLLGVYFLTNLILAVI) form a helical membrane-spanning segment. At 330–453 (YDSFKEQLAK…LCEWLKSFVR (124 aa)) the chain is on the cytoplasmic side. 2 consecutive EF-hand domains span residues 347–382 (TRKSILEKAFGIIDATGQGYLNKEQCLSLLDELNKY) and 388–423 (TSREDFELIFAELDQSGDFKVTSEEFATLCNTIAIK). Residues 454 to 474 (SPLFEYIVIFVLLMNLVAVII) traverse the membrane as a helical segment. At 475–493 (ETTLDIENSSSQKVWQEVE) the chain is on the extracellular side. An N-linked (GlcNAc...) asparagine glycan is attached at asparagine 482. A helical transmembrane segment spans residues 494-514 (FVFGWIYVIEMALKIFSLGFG). Over 515-523 (AYWMEGQNK) the chain is Cytoplasmic. Residues 524–544 (FDFVLTWTIFIGETLTFAFPS) form a helical membrane-spanning segment. Residues 545–553 (KLSFLSNGE) are Extracellular-facing. Residues 554–571 (WIRYLLLGRMLRLTRILL) form a helical; Voltage-sensor membrane-spanning segment. The Cytoplasmic portion of the chain corresponds to 572 to 595 (QVRRFRAFVATFFTLMSSLMPYLG). The helical transmembrane segment at 596 to 616 (IVFCTLCIYCSLGLQIFGGIV) threads the bilayer. Topologically, residues 617-640 (YAGNPTLEETDLFSNDYLLFNFND) are extracellular. The pore-forming intramembrane region spans 641 to 655 (YPSGMVTLFNLLVMG). Residues 656–676 (NWQAWMESYRQLTGSYWSLIY) are Extracellular-facing. The chain crosses the membrane as a helical span at residues 677 to 697 (FVSFYLISVLLLLNLIVAFVL). The Cytoplasmic segment spans residues 698–757 (EAFFAEMELEKDGEADIQDPTLEGRNRRRSVRVRTKGTMVDILLHHMLSNELDGSQNRDQ).

It belongs to the calcium channel alpha-1 subunit (TC 1.A.1.11) family. Two pore calcium channel subfamily. As to quaternary structure, homodimer. Expressed in shoot, mature leaf, cultured cells, and at lower level in roots.

It is found in the membrane. Inhibited by the VDCC blocker verapamil in yeast cells. Channel activity may be down-regulated by cytosolic Ca(2+) in rice cells. Inhibited by Al(3+). Functionally, may function as one of the major voltage-gated Ca(2+) channel (VDCC) across the plasma membrane. May be involved in the regulation of cytosolic Ca(2+) and in growth and development. Acts as the major ROS-responsive Ca(2+) channel and is the possible target of Al-dependent inhibition. Determines sensitivity to T.viride xylanase elicitor. Plays a regulatory role in elicitor-induced defense responses and hypersensitive cell death. The protein is Two pore calcium channel protein 1 (TPC1) of Oryza sativa subsp. japonica (Rice).